A 227-amino-acid chain; its full sequence is Probable methylthioribulose-1-phosphate dehydratase (227 aa).

Cys87 serves as a coordination point for substrate. His105 and His107 together coordinate Zn(2+). Catalysis depends on Glu129, which acts as the Proton donor/acceptor. Residue His185 coordinates Zn(2+).

This sequence belongs to the aldolase class II family. MtnB subfamily. The cofactor is Zn(2+).

Its subcellular location is the cytoplasm. It catalyses the reaction 5-(methylsulfanyl)-D-ribulose 1-phosphate = 5-methylsulfanyl-2,3-dioxopentyl phosphate + H2O. The protein operates within amino-acid biosynthesis; L-methionine biosynthesis via salvage pathway; L-methionine from S-methyl-5-thio-alpha-D-ribose 1-phosphate: step 2/6. Its function is as follows. Catalyzes the dehydration of methylthioribulose-1-phosphate (MTRu-1-P) into 2,3-diketo-5-methylthiopentyl-1-phosphate (DK-MTP-1-P). The chain is Probable methylthioribulose-1-phosphate dehydratase from Drosophila melanogaster (Fruit fly).